A 3582-amino-acid chain; its full sequence is Ubiquitin carboxyl-terminal hydrolase 34 (3582 aa).

A phosphoserine mark is found at S352, S486, S487, and S490. Disordered stretches follow at residues 503-533 (EEEELRRAAPSPWSPAASPQSSDNSDTHQSG), 551-670 (QQRL…ELRN), 682-705 (GESQGTSERNGTNSGTGKDLVFNT), 775-801 (HHHHHHHHHHHHHHHHHHHHHHHDGHM), and 1496-1515 (TGSYSDLYPDSDDSSEDQVE). Residues 510–524 (AAPSPWSPAASPQSS) are compositionally biased toward low complexity. Over residues 560-570 (SMQGSSDETAN) the composition is skewed to polar residues. The span at 571-590 (SGEDGSSGPGSSSGHSDGSS) shows a compositional bias: low complexity. Positions 591–609 (NEVNSSHASQSAGSPGSEV) are enriched in polar residues. Acidic residues predominate over residues 610-653 (QSEDIADIEALKEEEEEEEEEEEEEEEEDDEEEEDEEEDDDDDD). The segment covering 684–697 (SQGTSERNGTNSGT) has biased composition (polar residues). Residues 775–798 (HHHHHHHHHHHHHHHHHHHHHHHD) are compositionally biased toward basic residues. Positions 1504–1514 (PDSDDSSEDQV) are enriched in acidic residues. S1506 bears the Phosphoserine mark. The USP domain maps to 1931-2276 (VGLTNLGATC…SAYMLFYKRM (346 aa)). Residue C1940 is the Nucleophile of the active site. The active-site Proton acceptor is H2201. At S2525 the chain carries Phosphoserine. The tract at residues 3369 to 3484 (SLQEQEAKER…QSNNGRFDDC (116 aa)) is disordered. Residues 3373–3384 (QEAKERKTKDDE) show a composition bias toward basic and acidic residues. 2 positions are modified to phosphoserine: S3395 and S3396. T3418 is subject to Phosphothreonine. S3423 and S3443 each carry phosphoserine. Over residues 3463–3484 (DGSHIRSQHAEEQSNNGRFDDC) the composition is skewed to basic and acidic residues. S3539 is modified (phosphoserine).

This sequence belongs to the peptidase C19 family. Interacts with AXIN1 and AXIN2.

It carries out the reaction Thiol-dependent hydrolysis of ester, thioester, amide, peptide and isopeptide bonds formed by the C-terminal Gly of ubiquitin (a 76-residue protein attached to proteins as an intracellular targeting signal).. Functionally, ubiquitin hydrolase that can remove conjugated ubiquitin from AXIN1 and AXIN2, thereby acting as a regulator of Wnt signaling pathway. Acts as an activator of the Wnt signaling pathway downstream of the beta-catenin destruction complex by deubiquitinating and stabilizing AXIN1 and AXIN2, leading to promote nuclear accumulation of AXIN1 and AXIN2 and positively regulate beta-catenin (CTNBB1)-mediated transcription. Recognizes and hydrolyzes the peptide bond at the C-terminal Gly of ubiquitin. Involved in the processing of poly-ubiquitin precursors as well as that of ubiquitinated proteins. The protein is Ubiquitin carboxyl-terminal hydrolase 34 (Usp34) of Mus musculus (Mouse).